The sequence spans 577 residues: Arginine--tRNA ligase (577 aa).

The 'HIGH' region motif lies at 122–132 (PNVAKEMHVGH).

It belongs to the class-I aminoacyl-tRNA synthetase family. Monomer.

The protein localises to the cytoplasm. It carries out the reaction tRNA(Arg) + L-arginine + ATP = L-arginyl-tRNA(Arg) + AMP + diphosphate. The sequence is that of Arginine--tRNA ligase from Salmonella paratyphi A (strain ATCC 9150 / SARB42).